Here is a 671-residue protein sequence, read N- to C-terminus: DNA ligase (671 aa).

NAD(+) is bound by residues 31 to 35 (DAEYD), 80 to 81 (SL), and glutamate 110. Catalysis depends on lysine 112, which acts as the N6-AMP-lysine intermediate. 4 residues coordinate NAD(+): arginine 133, glutamate 167, lysine 283, and lysine 307. Positions 401, 404, 419, and 424 each coordinate Zn(2+). One can recognise a BRCT domain in the interval 587 to 671 (EEELVFAGKT…YLPDEGGLNE (85 aa)).

Belongs to the NAD-dependent DNA ligase family. LigA subfamily. It depends on Mg(2+) as a cofactor. Mn(2+) serves as cofactor.

It catalyses the reaction NAD(+) + (deoxyribonucleotide)n-3'-hydroxyl + 5'-phospho-(deoxyribonucleotide)m = (deoxyribonucleotide)n+m + AMP + beta-nicotinamide D-nucleotide.. In terms of biological role, DNA ligase that catalyzes the formation of phosphodiester linkages between 5'-phosphoryl and 3'-hydroxyl groups in double-stranded DNA using NAD as a coenzyme and as the energy source for the reaction. It is essential for DNA replication and repair of damaged DNA. The sequence is that of DNA ligase from Listeria innocua serovar 6a (strain ATCC BAA-680 / CLIP 11262).